A 477-amino-acid chain; its full sequence is Sporulation-specific protein 77 (477 aa).

The interval 428-452 is disordered; the sequence is SQQRESSNAESESITSSTEEDEEGL. Positions 432 to 444 are enriched in low complexity; it reads ESSNAESESITSS.

Its subcellular location is the cytoplasm. Required for spore wall assembly and ascus formation. This is Sporulation-specific protein 77 (SPO77) from Saccharomyces cerevisiae (strain ATCC 204508 / S288c) (Baker's yeast).